Reading from the N-terminus, the 256-residue chain is Small ribosomal subunit protein eS1 (256 aa).

Positions 1-18 are enriched in basic residues; sequence MAVGKNKRLSKGKKGIKK. Residues 1–20 are disordered; sequence MAVGKNKRLSKGKKGIKKRT. Ala-2 is modified (N-acetylalanine; partial).

Belongs to the eukaryotic ribosomal protein eS1 family. In terms of assembly, component of the small ribosomal subunit. Mature ribosomes consist of a small (40S) and a large (60S) subunit. The 40S subunit contains about 33 different proteins and 1 molecule of RNA (18S). The 60S subunit contains about 49 different proteins and 3 molecules of RNA (25S, 5.8S and 5S).

It is found in the cytoplasm. This is Small ribosomal subunit protein eS1 (rps1) from Emericella nidulans (strain FGSC A4 / ATCC 38163 / CBS 112.46 / NRRL 194 / M139) (Aspergillus nidulans).